The following is a 568-amino-acid chain: 2-succinyl-5-enolpyruvyl-6-hydroxy-3-cyclohexene-1-carboxylate synthase (568 aa).

The protein belongs to the TPP enzyme family. MenD subfamily. As to quaternary structure, homodimer. Requires Mg(2+) as cofactor. Mn(2+) serves as cofactor. Thiamine diphosphate is required as a cofactor.

It catalyses the reaction isochorismate + 2-oxoglutarate + H(+) = 5-enolpyruvoyl-6-hydroxy-2-succinyl-cyclohex-3-ene-1-carboxylate + CO2. Its pathway is quinol/quinone metabolism; 1,4-dihydroxy-2-naphthoate biosynthesis; 1,4-dihydroxy-2-naphthoate from chorismate: step 2/7. It participates in quinol/quinone metabolism; menaquinone biosynthesis. Its function is as follows. Catalyzes the thiamine diphosphate-dependent decarboxylation of 2-oxoglutarate and the subsequent addition of the resulting succinic semialdehyde-thiamine pyrophosphate anion to isochorismate to yield 2-succinyl-5-enolpyruvyl-6-hydroxy-3-cyclohexene-1-carboxylate (SEPHCHC). The protein is 2-succinyl-5-enolpyruvyl-6-hydroxy-3-cyclohexene-1-carboxylate synthase of Histophilus somni (strain 129Pt) (Haemophilus somnus).